Reading from the N-terminus, the 248-residue chain is Ubiquinone biosynthesis O-methyltransferase (248 aa).

S-adenosyl-L-methionine is bound by residues Arg-41, Gly-72, Asp-93, and Met-136.

This sequence belongs to the methyltransferase superfamily. UbiG/COQ3 family.

The enzyme catalyses a 3-demethylubiquinol + S-adenosyl-L-methionine = a ubiquinol + S-adenosyl-L-homocysteine + H(+). It catalyses the reaction a 3-(all-trans-polyprenyl)benzene-1,2-diol + S-adenosyl-L-methionine = a 2-methoxy-6-(all-trans-polyprenyl)phenol + S-adenosyl-L-homocysteine + H(+). Its pathway is cofactor biosynthesis; ubiquinone biosynthesis. In terms of biological role, O-methyltransferase that catalyzes the 2 O-methylation steps in the ubiquinone biosynthetic pathway. This Sinorhizobium medicae (strain WSM419) (Ensifer medicae) protein is Ubiquinone biosynthesis O-methyltransferase.